A 146-amino-acid chain; its full sequence is Small ribosomal subunit protein uS5 (146 aa).

In terms of domain architecture, S5 DRBM spans phenylalanine 8–valine 71.

It belongs to the universal ribosomal protein uS5 family. Part of the 30S ribosomal subunit. Contacts proteins S4 and S8.

In terms of biological role, with S4 and S12 plays an important role in translational accuracy. Functionally, located at the back of the 30S subunit body where it stabilizes the conformation of the head with respect to the body. The chain is Small ribosomal subunit protein uS5 from Sulfurimonas denitrificans (strain ATCC 33889 / DSM 1251) (Thiomicrospira denitrificans (strain ATCC 33889 / DSM 1251)).